The following is a 263-amino-acid chain: 4-hydroxy-tetrahydrodipicolinate reductase (263 aa).

Residues 8 to 13 (GASGRM), Asp-34, 99 to 101 (GTT), and 125 to 128 (SPNY) each bind NAD(+). His-157 (proton donor/acceptor) is an active-site residue. Position 158 (His-158) interacts with (S)-2,3,4,5-tetrahydrodipicolinate. The active-site Proton donor is Lys-161. Residue 167–168 (GT) participates in (S)-2,3,4,5-tetrahydrodipicolinate binding.

It belongs to the DapB family.

The protein resides in the cytoplasm. It carries out the reaction (S)-2,3,4,5-tetrahydrodipicolinate + NAD(+) + H2O = (2S,4S)-4-hydroxy-2,3,4,5-tetrahydrodipicolinate + NADH + H(+). The catalysed reaction is (S)-2,3,4,5-tetrahydrodipicolinate + NADP(+) + H2O = (2S,4S)-4-hydroxy-2,3,4,5-tetrahydrodipicolinate + NADPH + H(+). The protein operates within amino-acid biosynthesis; L-lysine biosynthesis via DAP pathway; (S)-tetrahydrodipicolinate from L-aspartate: step 4/4. Catalyzes the conversion of 4-hydroxy-tetrahydrodipicolinate (HTPA) to tetrahydrodipicolinate. In Methanococcoides burtonii (strain DSM 6242 / NBRC 107633 / OCM 468 / ACE-M), this protein is 4-hydroxy-tetrahydrodipicolinate reductase.